Reading from the N-terminus, the 826-residue chain is Homeobox-leucine zipper protein HDG5 (826 aa).

Disordered regions lie at residues 1–34 (MLTM…IQNP) and 69–119 (EMME…HRHT). The span at 23-34 (PSSSSPGTIQNP) shows a compositional bias: low complexity. Positions 88 to 105 (EDPKFGNESDVNELHDDE) are enriched in basic and acidic residues. Residues 110–119 (AKKKRYHRHT) show a composition bias toward basic residues. The homeobox DNA-binding region spans 111–170 (KKKRYHRHTNRQIQEMEALFKENPHPDDKQRKRLSAELGLKPRQVKFWFQNRRTQMKAQQ). Residues 165–189 (QMKAQQDRNENVMLRAENDNLKSEN) are a coiled coil. Residues 314–558 (ADEEKVIAME…LQRQCERIAS (245 aa)) enclose the START domain.

This sequence belongs to the HD-ZIP homeobox family. Class IV subfamily. In terms of tissue distribution, expressed in shoot apical meristem (SAM) with higher levels in L1 cells and the epidermal layer of young leaves. Expressed in the L1 of apical inflorescence meristems, early flower primordia, carpel and stamen filament epidermis, ovule primordia, nucellus and chalaze.

The protein localises to the nucleus. Functionally, probable transcription factor. Involved, together with PDF2, in the regulation of flower organs development by promoting the expression of APETALA 3 (AP3) in the epidermis and internal cell layers of developing flowers. The polypeptide is Homeobox-leucine zipper protein HDG5 (Arabidopsis thaliana (Mouse-ear cress)).